Consider the following 209-residue polypeptide: Uracil phosphoribosyltransferase (209 aa).

Residues Arg-79, Arg-104, and 131-139 (DPMLATGGS) contribute to the 5-phospho-alpha-D-ribose 1-diphosphate site. Residues Ile-194 and 199–201 (GDA) each bind uracil. Asp-200 contributes to the 5-phospho-alpha-D-ribose 1-diphosphate binding site.

This sequence belongs to the UPRTase family. Mg(2+) is required as a cofactor.

It catalyses the reaction UMP + diphosphate = 5-phospho-alpha-D-ribose 1-diphosphate + uracil. Its pathway is pyrimidine metabolism; UMP biosynthesis via salvage pathway; UMP from uracil: step 1/1. With respect to regulation, allosterically activated by GTP. Catalyzes the conversion of uracil and 5-phospho-alpha-D-ribose 1-diphosphate (PRPP) to UMP and diphosphate. The chain is Uracil phosphoribosyltransferase from Agathobacter rectalis (strain ATCC 33656 / DSM 3377 / JCM 17463 / KCTC 5835 / VPI 0990) (Eubacterium rectale).